Consider the following 209-residue polypeptide: Large ribosomal subunit protein uL4 (209 aa).

Positions 44 to 77 are disordered; it reads QRQGTHKSKERSEVSGSTRKLIRQKGGGGARRGD.

This sequence belongs to the universal ribosomal protein uL4 family. As to quaternary structure, part of the 50S ribosomal subunit.

Functionally, one of the primary rRNA binding proteins, this protein initially binds near the 5'-end of the 23S rRNA. It is important during the early stages of 50S assembly. It makes multiple contacts with different domains of the 23S rRNA in the assembled 50S subunit and ribosome. Its function is as follows. Forms part of the polypeptide exit tunnel. The polypeptide is Large ribosomal subunit protein uL4 (Parabacteroides distasonis (strain ATCC 8503 / DSM 20701 / CIP 104284 / JCM 5825 / NCTC 11152)).